Consider the following 255-residue polypeptide: Ribosomal RNA small subunit methyltransferase A (255 aa).

S-adenosyl-L-methionine is bound by residues His12, Leu14, Gly39, Glu60, Asp81, and Asn103.

Belongs to the class I-like SAM-binding methyltransferase superfamily. rRNA adenine N(6)-methyltransferase family. RsmA subfamily.

The protein localises to the cytoplasm. It carries out the reaction adenosine(1518)/adenosine(1519) in 16S rRNA + 4 S-adenosyl-L-methionine = N(6)-dimethyladenosine(1518)/N(6)-dimethyladenosine(1519) in 16S rRNA + 4 S-adenosyl-L-homocysteine + 4 H(+). Functionally, specifically dimethylates two adjacent adenosines (A1518 and A1519) in the loop of a conserved hairpin near the 3'-end of 16S rRNA in the 30S particle. May play a critical role in biogenesis of 30S subunits. The polypeptide is Ribosomal RNA small subunit methyltransferase A (Variovorax paradoxus (strain S110)).